The chain runs to 372 residues: Probable leucine aminopeptidase MCYG_03459 (372 aa).

The N-terminal stretch at 1-18 (MKISTLAVVSAFAVTAIA) is a signal peptide. N-linked (GlcNAc...) asparagine glycosylation occurs at Asn-95. 2 residues coordinate Zn(2+): His-175 and Asp-194. N-linked (GlcNAc...) asparagine glycans are attached at residues Asn-195 and Asn-219. Positions 233 and 260 each coordinate Zn(2+). A disulfide bond links Cys-305 and Cys-309. His-338 lines the Zn(2+) pocket.

This sequence belongs to the peptidase M28 family. M28E subfamily. As to quaternary structure, monomer. It depends on Zn(2+) as a cofactor.

It localises to the secreted. Its function is as follows. Probable extracellular aminopeptidase which contributes to pathogenicity. The sequence is that of Probable leucine aminopeptidase MCYG_03459 from Arthroderma otae (strain ATCC MYA-4605 / CBS 113480) (Microsporum canis).